We begin with the raw amino-acid sequence, 622 residues long: Probable potassium transport system protein Kup (622 aa).

Transmembrane regions (helical) follow at residues L8–L28, I50–V70, L103–I123, P137–V157, F168–I188, A203–L223, W247–L267, A285–I305, I337–F357, A366–I386, P393–A413, and L419–T439.

The protein belongs to the HAK/KUP transporter (TC 2.A.72) family.

The protein localises to the cell inner membrane. The enzyme catalyses K(+)(in) + H(+)(in) = K(+)(out) + H(+)(out). Its function is as follows. Transport of potassium into the cell. Likely operates as a K(+):H(+) symporter. The sequence is that of Probable potassium transport system protein Kup from Verminephrobacter eiseniae (strain EF01-2).